Consider the following 1456-residue polypeptide: MIESENLNRGEIIKELCLCNGLTYEIVGQEGSDTSKLEMFFSGYPRIVGLSLFHNLSSLTIVAQDIREISGLETCLQLKELWIAECCIEKIEGLQGCRNLEKLYLYYNKISKIENLEKLIKLEVLWLNHNMIKNIEGLQTLKNLKDLNLAGNLVSSIGRCLDPNEQLEKLNLSGNQITSFKDLTNLTKLTRLKDLCLNDPQYKSNPVCQLCNYSTHVLYHLPSLQRLDTFDVSAKQIKELADSTAMKKIMYYNMRIKTVQRHLNEELEKLNDRKCKLQKLPEERIKLFNFAKKTLERELAELKISSKGQSDTTPEAEKPRNSEVVTQESVLQQKILTKLSALDDRVTFWNKKLHEIEAIYRTEVKQKKKTHGLLTPFLLTELETVGNIHFEEGTQADDWFNSCCELILSRFCTWDFRAYGITGVKVKRVIKVNNRILRLKFEEKFQKCLDLEDTQDPDYRKMLECLFYVFDPEVTVKKKHLLQILERGFKDSDTSKPSLKKEAVTLVNSLSMCECPRIEFLQQKYKEEKKGPSESELYRHGTILIAKVFLGQSIQARDQEPINKANYPMVNSVFVPQRHVLRQRTCDCGYRQYKWFVFDHDLVLPEYIVEFEYTTVVKVHSLFSTSNNVILEEGKKYSEGLVFSQDLKFDDEVLKMEPRIKPRPKLISLDEKTIISLAKTNIYSHIVNLNLHGNSLSKLRDLAKLTGLRKLNISFNEFTCLDDVYHLYNLEYLDASHNHVITLEGFRGLMKLKHLDLSWNQLKKTGEEINVLCKHTTSLLTLDIQHNPWQKPATLRLSVIGRLKTLTHLDGLVISEEETRAALKFISGTKITQLTLLQHSSSKEERPRMLSTWPSAKILTQISKLGPHFHLTGNWYSKITALNLDGQHLFEITNLEKLENLKWASFSNNNLSKMEGLESCVNLEELTLDGNCISKIEGITRLTKLSRLSMNNNLLTGLEKHTFDNLLHLHSLSLENNRITSLSALQKTFTLIELYISNNYIAVNQEIYNLKGLCNLVILDMYGNIIIWNQENYRFFVIFHLPELKALDGVSIETSETETAKDLFGGRLTSDMIAERQGHSNFIQMQELNWTSSAIRTVDLIPVDHFRNVSNVNLQNNNLTSFSGLIYLPNVKVLCLNYNHIESIMPRLKPQTHLSSRQLLYQKVPSSGYGQQGTSKLNRDSVGSENLPPIMQSLEVLHLGYNGICNLVQLQLNRLRNLKFLFLQGNEISQVEGLDNLIVLQELVVDHNRIRAFNDTAFSKPSSLLMLHLEENRLRELSKLQSLVKLEKLFLGYNKIQDITELEKLDVIPSLRELTVYGNPICRKMVHRHVLIFRLPNLQMLDGIPINSDDRAKAEFHFSELQAKKSSIIQNNLPTSKSSLPSHLQTPLPCKFVPVTNSTDGGSFCHVKASPIKITNVLLPAGFSRFLGPDFTLTPEVEGIFTKSFRENEKTNKQQQ.

8 LRR repeats span residues 53-78, 97-119, 120-141, 142-164, 166-188, 190-212, 224-248, and 264-287; these read FHNL…CLQL, CRNL…LEKL, IKLE…LQTL, KNLK…LDPN, QLEK…NLTK, TRLK…QLCN, LQRL…AMKK, and NEEL…RIKL. The segment at 305 to 325 is disordered; it reads SSKGQSDTTPEAEKPRNSEVV. One copy of the LRR 9 repeat lies at 339–362; the sequence is LSALDDRVTFWNKKLHEIEAIYRT. Residue Y525 is modified to Phosphotyrosine. 23 LRR repeats span residues 661–683, 684–705, 706–727, 729–748, 749–772, 776–802, 806–833, 876–898, 899–920, 921–942, 943–965, 967–991, 993–1010, 1013–1037, 1082–1105, 1106–1128, 1129–1151, 1191–1214, 1215–1237, 1238–1260, 1262–1283, 1284–1307, and 1309–1335; these read KPRP…TNIY, SHIV…LAKL, TGLR…VYHL, NLEY…GFRG, LMKL…INVL, TTSL…VIGR, LTHL…KITQ, YSKI…LEKL, ENLK…LESC, VNLE…ITRL, TKLS…TFDN, LHLH…TFTL, ELYI…IYNL, LCNL…RFFV, FIQM…PVDH, FRNV…LIYL, PNVK…LKPQ, MQSL…QLNR, LRNL…LDNL, IVLQ…AFSK, SSLL…LQSL, VKLE…KLDV, and PSLR…IFRL.

In Mus musculus (Mouse), this protein is Leucine-rich repeat-containing protein 9 (Lrrc9).